We begin with the raw amino-acid sequence, 248 residues long: 5'-nucleotidase SurE (248 aa).

Residues Asp8, Asp9, Ser39, and Asn91 each coordinate a divalent metal cation.

Belongs to the SurE nucleotidase family. A divalent metal cation serves as cofactor.

The protein localises to the cytoplasm. It carries out the reaction a ribonucleoside 5'-phosphate + H2O = a ribonucleoside + phosphate. Functionally, nucleotidase that shows phosphatase activity on nucleoside 5'-monophosphates. This is 5'-nucleotidase SurE from Neisseria gonorrhoeae (strain ATCC 700825 / FA 1090).